Here is a 376-residue protein sequence, read N- to C-terminus: N-acetyldiaminopimelate deacetylase (376 aa).

D69 is a catalytic residue. E128 acts as the Proton acceptor in catalysis.

It belongs to the peptidase M20A family. N-acetyldiaminopimelate deacetylase subfamily.

The catalysed reaction is N-acetyl-(2S,6S)-2,6-diaminopimelate + H2O = (2S,6S)-2,6-diaminopimelate + acetate. It participates in amino-acid biosynthesis; L-lysine biosynthesis via DAP pathway; LL-2,6-diaminopimelate from (S)-tetrahydrodipicolinate (acetylase route): step 3/3. In terms of biological role, catalyzes the conversion of N-acetyl-diaminopimelate to diaminopimelate and acetate. The protein is N-acetyldiaminopimelate deacetylase of Bacillus cereus (strain 03BB102).